Here is a 482-residue protein sequence, read N- to C-terminus: UDP-N-acetylmuramate--L-alanine ligase (482 aa).

123-129 (GTHGKTT) is a binding site for ATP.

Belongs to the MurCDEF family.

It localises to the cytoplasm. It carries out the reaction UDP-N-acetyl-alpha-D-muramate + L-alanine + ATP = UDP-N-acetyl-alpha-D-muramoyl-L-alanine + ADP + phosphate + H(+). It participates in cell wall biogenesis; peptidoglycan biosynthesis. Its function is as follows. Cell wall formation. In Pseudomonas entomophila (strain L48), this protein is UDP-N-acetylmuramate--L-alanine ligase.